The chain runs to 1026 residues: Isoleucine--tRNA ligase (1026 aa).

The 'HIGH' region motif lies at 51–61 (PTANGRPHIGH). The 'KMSKS' region signature appears at 591–595 (KMSKS). Lysine 594 provides a ligand contact to ATP.

It belongs to the class-I aminoacyl-tRNA synthetase family. IleS type 2 subfamily. Monomer. The cofactor is Zn(2+).

Its subcellular location is the cytoplasm. It catalyses the reaction tRNA(Ile) + L-isoleucine + ATP = L-isoleucyl-tRNA(Ile) + AMP + diphosphate. Functionally, catalyzes the attachment of isoleucine to tRNA(Ile). As IleRS can inadvertently accommodate and process structurally similar amino acids such as valine, to avoid such errors it has two additional distinct tRNA(Ile)-dependent editing activities. One activity is designated as 'pretransfer' editing and involves the hydrolysis of activated Val-AMP. The other activity is designated 'posttransfer' editing and involves deacylation of mischarged Val-tRNA(Ile). In Thermoplasma acidophilum (strain ATCC 25905 / DSM 1728 / JCM 9062 / NBRC 15155 / AMRC-C165), this protein is Isoleucine--tRNA ligase.